The primary structure comprises 84 residues: M-myrmeciitoxin-Mb2a (84 aa).

A signal peptide spans 1-21 (MKLSCLLLTLAIIFVLTIVHA). Residues 22-48 (PNVKAKALADPESDAVGFADAVGEADP) constitute a propeptide that is removed on maturation.

This sequence belongs to the formicidae venom precursor-01 superfamily. Ant pilosulin family. Expressed by the venom gland.

The protein resides in the secreted. Shows activity against E.coli and S.aureus (MIC&lt;6.25 uM), moderate activity against P.aeruginosa (MIC&lt;25 uM), weak activity against B.subtilis (MIC&lt;50 uM), and has no effect against L.garvieae, C.albicans, and S.cerevisiae. Has no hemolytic nor cytolytic activity. Causes an IgE-independent histamine release. The chain is M-myrmeciitoxin-Mb2a from Myrmecia banksi (Jack jumper ant).